Here is a 427-residue protein sequence, read N- to C-terminus: Trigger factor (427 aa).

One can recognise a PPIase FKBP-type domain in the interval 163-248; sequence GNIAIIDFKG…VKGIKAKELP (86 aa).

It belongs to the FKBP-type PPIase family. Tig subfamily.

It localises to the cytoplasm. The catalysed reaction is [protein]-peptidylproline (omega=180) = [protein]-peptidylproline (omega=0). Functionally, involved in protein export. Acts as a chaperone by maintaining the newly synthesized protein in an open conformation. Functions as a peptidyl-prolyl cis-trans isomerase. The protein is Trigger factor of Clostridium botulinum (strain Eklund 17B / Type B).